The chain runs to 156 residues: Homeobox-leucine zipper protein ATHB-52 (156 aa).

The homeobox DNA-binding region spans 8-67; it reads GKNKKKRLTQDQVRQLEKCFTMNKKLEPDLKLQLSNQLGLPQRQVAVWFQNKRARFKTQS. A leucine-zipper region spans residues 68–96; that stretch reads LEVQHCTLQSKHEAALSDKAKLEHQVQFL.

It belongs to the HD-ZIP homeobox family. Class I subfamily. In terms of tissue distribution, expressed in roots and flowers.

The protein localises to the nucleus. Probable transcription factor. The polypeptide is Homeobox-leucine zipper protein ATHB-52 (ATHB-52) (Arabidopsis thaliana (Mouse-ear cress)).